The sequence spans 430 residues: Trigger factor (430 aa).

The PPIase FKBP-type domain occupies 157-242 (GDLVALETWS…AVEVSEPVLP (86 aa)).

This sequence belongs to the FKBP-type PPIase family. Tig subfamily.

The protein localises to the cytoplasm. It catalyses the reaction [protein]-peptidylproline (omega=180) = [protein]-peptidylproline (omega=0). Functionally, involved in protein export. Acts as a chaperone by maintaining the newly synthesized protein in an open conformation. Functions as a peptidyl-prolyl cis-trans isomerase. The chain is Trigger factor from Xanthomonas euvesicatoria pv. vesicatoria (strain 85-10) (Xanthomonas campestris pv. vesicatoria).